Reading from the N-terminus, the 397-residue chain is Mannonate dehydratase (397 aa).

Belongs to the mannonate dehydratase family. Requires Fe(2+) as cofactor. The cofactor is Mn(2+).

The catalysed reaction is D-mannonate = 2-dehydro-3-deoxy-D-gluconate + H2O. It participates in carbohydrate metabolism; pentose and glucuronate interconversion. Catalyzes the dehydration of D-mannonate. This is Mannonate dehydratase from Saccharophagus degradans (strain 2-40 / ATCC 43961 / DSM 17024).